Consider the following 458-residue polypeptide: Transcription factor verZ (458 aa).

The zn(2)-C6 fungal-type DNA-binding region spans 117–144 (CDRCQAAKVKCGHEKPSCRRCTYHKVEC). Disordered regions lie at residues 153-256 (GRPR…MQSM) and 435-458 (MEEEDDPCSEIKLNPNRLRLEDGK). Composition is skewed to polar residues over residues 167–186 (PSPQGSINGASDENSRSKSA), 193–207 (FTGTEPITEARQSPV), and 223–235 (RAEPWTPSLTTNF).

It is found in the nucleus. Functionally, transcription factor; part of the gene cluster that mediates the biosynthesis of 11'-deoxyverticillin A, one of the dimeric epipolythiodioxopiperazines (ETPs) from the verticillin family that act as mycotoxins. 11'-deoxyverticillin A is required for normal conidiation. Directly binds the consensus motif 5'-(T/C)(C/A)(G/T)GN3CC(G/T)(A/G)(G/C)-3' localized in the upstream regions of the verticillin biosynthetic genes. This Clonostachys rogersoniana protein is Transcription factor verZ.